Consider the following 102-residue polypeptide: Acylphosphatase 1 (102 aa).

The region spanning 12–100 (TRLVRVRGRV…PRFDRFEQLP (89 aa)) is the Acylphosphatase-like domain. Residues Arg27 and Asn45 contribute to the active site.

This sequence belongs to the acylphosphatase family.

The enzyme catalyses an acyl phosphate + H2O = a carboxylate + phosphate + H(+). The chain is Acylphosphatase 1 (acyP1) from Ralstonia nicotianae (strain ATCC BAA-1114 / GMI1000) (Ralstonia solanacearum).